The primary structure comprises 142 residues: FAD synthase (142 aa).

Residues 9-10 (VF), 14-17 (HLGH), Asp93, and Tyr120 contribute to the ATP site.

The protein belongs to the archaeal FAD synthase family. In terms of assembly, homodimer. Requires a divalent metal cation as cofactor.

The catalysed reaction is FMN + ATP + H(+) = FAD + diphosphate. It participates in cofactor biosynthesis; FAD biosynthesis; FAD from FMN: step 1/1. Its function is as follows. Catalyzes the transfer of the AMP portion of ATP to flavin mononucleotide (FMN) to produce flavin adenine dinucleotide (FAD) coenzyme. This Thermoplasma volcanium (strain ATCC 51530 / DSM 4299 / JCM 9571 / NBRC 15438 / GSS1) protein is FAD synthase (ribL).